Consider the following 182-residue polypeptide: ADP-ribosylation factor-like protein 3 (182 aa).

Gly2 is lipidated: N-myristoyl glycine. Ser5 carries the post-translational modification Phosphoserine. GTP is bound by residues 24–31, Thr48, 67–71, Gly70, 126–129, and 159–161; these read GLDNAGKT, DIGGQ, NKQD, and SAL. Mg(2+) contacts are provided by Thr31 and Thr48.

It belongs to the small GTPase superfamily. Arf family. As to quaternary structure, found in a complex with ARL3, RP2 and UNC119 (or UNC119B); RP2 induces hydrolysis of GTP ARL3 in the complex, leading to the release of UNC119 (or UNC119B). Interacts with RP2; interaction is direct and stimulated with the activated GTP-bound form of ARL3. Interacts with SYS1. Interacts with ARL2BP; the GTP-bound form interacts with ARL2BP. Microtubule-associated protein. Does not interact with TBCC. Interacts with RP2. Interacts with PDE6D; the interaction occurs specifically with the GTP-bound form of ARL3. Interacts with GGA1; the interaction recruits PKD1:PKD2 complex to trans-Golgi network and is required for ciliary targeting of PKD1:PKD2 complex. Interacts with DNAAF9.

It localises to the golgi apparatus membrane. The protein localises to the cytoplasm. It is found in the cytoskeleton. The protein resides in the spindle. Its subcellular location is the nucleus. It localises to the microtubule organizing center. The protein localises to the centrosome. It is found in the cell projection. The protein resides in the cilium. Functionally, small GTP-binding protein which cycles between an inactive GDP-bound and an active GTP-bound form, and the rate of cycling is regulated by guanine nucleotide exchange factors (GEF) and GTPase-activating proteins (GAP). Required for normal cytokinesis and cilia signaling. Required for targeting proteins to the cilium, including myristoylated NPHP3 and prenylated INPP5E. Targets NPHP3 to the ciliary membrane by releasing myristoylated NPHP3 from UNC119B cargo adapter into the cilium. Requires assistance from GTPase-activating proteins (GAPs) like RP2 and PDE6D, in order to cycle between inactive GDP-bound and active GTP-bound forms. Required for PKD1:PKD2 complex targeting from the trans-Golgi network to the cilium. The polypeptide is ADP-ribosylation factor-like protein 3 (Mus musculus (Mouse)).